Consider the following 601-residue polypeptide: Sulfite reductase [NADPH] flavoprotein alpha-component (601 aa).

Residues 64-202 (ITLISASQTG…AAAEWRARIV (139 aa)) enclose the Flavodoxin-like domain. FMN-binding positions include 70 to 75 (SQTGNA), 117 to 120 (STQG), and 153 to 162 (LGDTSYEFFC). Residues 236-450 (EEPLVASLSV…IEHNDNFRLP (215 aa)) form the FAD-binding FR-type domain. Residues Thr324, Ala358, 388–391 (RLYS), 406–408 (TVG), and 421–424 (GGAS) contribute to the FAD site. NADP(+) is bound by residues 521-522 (SR), 527-531 (KIYVQ), and Asp563. Tyr601 provides a ligand contact to FAD.

Belongs to the NADPH-dependent sulphite reductase flavoprotein subunit CysJ family. The protein in the N-terminal section; belongs to the flavodoxin family. This sequence in the C-terminal section; belongs to the flavoprotein pyridine nucleotide cytochrome reductase family. In terms of assembly, alpha(8)-beta(8). The alpha component is a flavoprotein, the beta component is a hemoprotein. FAD serves as cofactor. It depends on FMN as a cofactor.

The catalysed reaction is hydrogen sulfide + 3 NADP(+) + 3 H2O = sulfite + 3 NADPH + 4 H(+). The protein operates within sulfur metabolism; hydrogen sulfide biosynthesis; hydrogen sulfide from sulfite (NADPH route): step 1/1. In terms of biological role, component of the sulfite reductase complex that catalyzes the 6-electron reduction of sulfite to sulfide. This is one of several activities required for the biosynthesis of L-cysteine from sulfate. The flavoprotein component catalyzes the electron flow from NADPH -&gt; FAD -&gt; FMN to the hemoprotein component. In Enterobacter sp. (strain 638), this protein is Sulfite reductase [NADPH] flavoprotein alpha-component.